Consider the following 296-residue polypeptide: Probable DNA-directed RNA polymerase III subunit RPC6 (296 aa).

This sequence belongs to the eukaryotic RPC34/RPC39 RNA polymerase subunit family.

Its subcellular location is the nucleus. Its function is as follows. DNA-dependent RNA polymerase catalyzes the transcription of DNA into RNA using the four ribonucleoside triphosphates as substrates. Specific peripheric component of RNA polymerase III which synthesizes small RNAs, such as 5S rRNA and tRNAs. This Caenorhabditis elegans protein is Probable DNA-directed RNA polymerase III subunit RPC6.